Reading from the N-terminus, the 87-residue chain is Small ribosomal subunit protein bS20 (87 aa).

The segment at 1 to 27 is disordered; the sequence is MANIKSAKKRAVTSEKRRKHNASRRSM.

It belongs to the bacterial ribosomal protein bS20 family.

Its function is as follows. Binds directly to 16S ribosomal RNA. This chain is Small ribosomal subunit protein bS20, found in Erwinia tasmaniensis (strain DSM 17950 / CFBP 7177 / CIP 109463 / NCPPB 4357 / Et1/99).